We begin with the raw amino-acid sequence, 259 residues long: Pimeloyl-[acyl-carrier protein] methyl ester esterase (259 aa).

Substrate is bound by residues W18, 78 to 79, and 139 to 143; these read SL and FLALD. The Nucleophile role is filled by S78. Catalysis depends on residues D203 and H231. H231 contributes to the substrate binding site.

It belongs to the AB hydrolase superfamily. Carboxylesterase BioH family. As to quaternary structure, monomer.

The protein resides in the cytoplasm. It carries out the reaction 6-carboxyhexanoyl-[ACP] methyl ester + H2O = 6-carboxyhexanoyl-[ACP] + methanol + H(+). The protein operates within cofactor biosynthesis; biotin biosynthesis. Its function is as follows. The physiological role of BioH is to remove the methyl group introduced by BioC when the pimeloyl moiety is complete. It allows to synthesize pimeloyl-ACP via the fatty acid synthetic pathway through the hydrolysis of the ester bonds of pimeloyl-ACP esters. The polypeptide is Pimeloyl-[acyl-carrier protein] methyl ester esterase (Stenotrophomonas maltophilia (strain K279a)).